The primary structure comprises 186 residues: Negative modulator of initiation of replication (186 aa).

Positions 93–94 are interaction with DNA; the sequence is AV.

The protein belongs to the SeqA family. As to quaternary structure, homodimer. Polymerizes to form helical filaments.

The protein resides in the cytoplasm. Negative regulator of replication initiation, which contributes to regulation of DNA replication and ensures that replication initiation occurs exactly once per chromosome per cell cycle. Binds to pairs of hemimethylated GATC sequences in the oriC region, thus preventing assembly of replication proteins and re-initiation at newly replicated origins. Repression is relieved when the region becomes fully methylated. The chain is Negative modulator of initiation of replication from Shewanella halifaxensis (strain HAW-EB4).